The sequence spans 31 residues: Kappa-theraphotoxin-Ps1b (31 aa).

3 disulfide bridges follow: Cys-2/Cys-16, Cys-9/Cys-21, and Cys-15/Cys-25. Met-31 carries the post-translational modification Methionine amide.

It belongs to the neurotoxin 30 (phrixotoxin) family. In terms of tissue distribution, expressed by the venom gland.

It localises to the secreted. Functionally, potent and specific blocker of Kv4.2/KCND2 (IC(50)=34 nM) and Kv4.3/KCND3 (IC(50)=71 nM) potassium channels. Acts by altering the gating properties of these channels. The sequence is that of Kappa-theraphotoxin-Ps1b from Paraphysa scrofa (Chilean copper tarantula).